The primary structure comprises 98 residues: NADH-ubiquinone oxidoreductase chain 4L (98 aa).

3 helical membrane-spanning segments follow: residues 1–21 (MSLV…GLLM), 29–49 (SLLC…IMIL), and 61–81 (IILL…LVMV).

This sequence belongs to the complex I subunit 4L family. Core subunit of respiratory chain NADH dehydrogenase (Complex I) which is composed of 45 different subunits.

The protein localises to the mitochondrion inner membrane. It carries out the reaction a ubiquinone + NADH + 5 H(+)(in) = a ubiquinol + NAD(+) + 4 H(+)(out). In terms of biological role, core subunit of the mitochondrial membrane respiratory chain NADH dehydrogenase (Complex I) which catalyzes electron transfer from NADH through the respiratory chain, using ubiquinone as an electron acceptor. Part of the enzyme membrane arm which is embedded in the lipid bilayer and involved in proton translocation. This chain is NADH-ubiquinone oxidoreductase chain 4L (MT-ND4L), found in Mogera wogura (Japanese mole).